A 375-amino-acid polypeptide reads, in one-letter code: Chaperone protein DnaJ (375 aa).

A J domain is found at Asp5–Gly70. The segment at Gly136 to Glu214 adopts a CR-type zinc-finger fold. Zn(2+)-binding residues include Cys149, Cys152, Cys166, Cys169, Cys188, Cys191, Cys202, and Cys205. CXXCXGXG motif repeat units follow at residues Cys149–Gly156, Cys166–Gly173, Cys188–Gly195, and Cys202–Gly209.

It belongs to the DnaJ family. As to quaternary structure, homodimer. It depends on Zn(2+) as a cofactor.

The protein resides in the cytoplasm. In terms of biological role, participates actively in the response to hyperosmotic and heat shock by preventing the aggregation of stress-denatured proteins and by disaggregating proteins, also in an autonomous, DnaK-independent fashion. Unfolded proteins bind initially to DnaJ; upon interaction with the DnaJ-bound protein, DnaK hydrolyzes its bound ATP, resulting in the formation of a stable complex. GrpE releases ADP from DnaK; ATP binding to DnaK triggers the release of the substrate protein, thus completing the reaction cycle. Several rounds of ATP-dependent interactions between DnaJ, DnaK and GrpE are required for fully efficient folding. Also involved, together with DnaK and GrpE, in the DNA replication of plasmids through activation of initiation proteins. This chain is Chaperone protein DnaJ, found in Rhizobium johnstonii (strain DSM 114642 / LMG 32736 / 3841) (Rhizobium leguminosarum bv. viciae).